The chain runs to 372 residues: Alanine dehydrogenase 1 (372 aa).

Residue His-94 is part of the active site. 170 to 200 (TYVIFGGGVAATNAANVALGLNAKVIIIELN) is an NAD(+) binding site.

The protein belongs to the AlaDH/PNT family.

It carries out the reaction L-alanine + NAD(+) + H2O = pyruvate + NH4(+) + NADH + H(+). The protein operates within amino-acid degradation; L-alanine degradation via dehydrogenase pathway; NH(3) and pyruvate from L-alanine: step 1/1. In terms of biological role, may play a role in cell wall synthesis as L-alanine is an important constituent of the peptidoglycan layer. This is Alanine dehydrogenase 1 (ald1) from Staphylococcus aureus (strain bovine RF122 / ET3-1).